Consider the following 348-residue polypeptide: MAPINIVDVKKNYGSVPAVKGINLAVADGEFIVLVGPSGCGKSTLLRMIAGLESITGGRVEIGGRNVNKAEPAERDIAMVFQNYALYPHMTVRGNLEYGLKNRGTARAEIDRRVKEAADILEIGPMLDRKPRELSGGQRQRVAMGRAIVREPAAFLFDEPLSNLDAKLRVQMRVEIRRLQRRLKTTSIYVTHDQLEAMTLADRLVVMNGGLVEQVGTPVEVYDRPASLFVAGFIGSPPMNLVPIEVFHATESGGTLALPEGTDMVGLRPDALLLEKPAEPSIRLNAIVELLEPIGGESHLHVRLGEGQQTIVLTVQGRPDFAESARIDVFARIDQMHPFNSRTGRRTD.

Positions 4–234 (INIVDVKKNY…PASLFVAGFI (231 aa)) constitute an ABC transporter domain. 36–43 (GPSGCGKS) is an ATP binding site.

Belongs to the ABC transporter superfamily. sn-glycerol-3-phosphate importer (TC 3.A.1.1.3) family. The complex is composed of two ATP-binding proteins (UgpC), two transmembrane proteins (UgpA and UgpE) and a solute-binding protein (UgpB).

The protein localises to the cell inner membrane. The enzyme catalyses sn-glycerol 3-phosphate(out) + ATP + H2O = sn-glycerol 3-phosphate(in) + ADP + phosphate + H(+). Part of the ABC transporter complex UgpBAEC involved in sn-glycerol-3-phosphate (G3P) import. Responsible for energy coupling to the transport system. The polypeptide is sn-glycerol-3-phosphate import ATP-binding protein UgpC 3 (Rhizobium etli (strain ATCC 51251 / DSM 11541 / JCM 21823 / NBRC 15573 / CFN 42)).